Reading from the N-terminus, the 28-residue chain is Trypsin inhibitor A (28 aa).

Cystine bridges form between Cys3-Cys20, Cys10-Cys22, and Cys16-Cys27.

The protein belongs to the protease inhibitor I7 (squash-type serine protease inhibitor) family.

It is found in the secreted. Inhibits trypsin. This Momordica charantia (Bitter gourd) protein is Trypsin inhibitor A.